Consider the following 603-residue polypeptide: MSKEPTAAAGLQNRFRTHYCGLLNRDSEGAGVKLGGWVHRIRDHGGLIFIDLRDHTGICQLVIQPESGELFRIAEGLHSESVISAEGSVVLRSDETVNPRLASGAIEVVVSAIKIESAAHPLPFPVADYMPTSEELRLKYRFLDLRRERLHENIIFRSQLTAAVRKYLTDLDFIEIQTPILTSSSPEGARDFLVPSRLHPGKFYALPQAPQQFKQLLMVSGFPRYFQIAPCFRDEDARADRSPGEFYQVDIEMSFVEQDDLFVILEGMFKHLVETMTTKRIAQYPFPRISYKDVMNRYGSDKPDLRIPIEIQDVTELFVNSGFKVFASNTKEGCCVKAMVLKGMGNESRLFYDKAEKRARELGSAGLAYIQFKEEAPKGPVVKFLKEEEMAALKEQLGIETGDVVFFGAGKWEQTCKIMGGMRNYFADVFPLDRDELSFCWIVDFPMFEYNEEDKKIDFSHNPFSMPQGEMEALEQHSPLDILAYQYDIVCNGIELSSGAIRNHRPDIMYKAFEIAGYPHDEVDARFGHMIEAFKHGAPPHGGIAPGLDRLVMILRDEQNIREVIAFPMNQSAQDLMMAAPSEVTAQQLKELHIKVELPEEEA.

L-aspartate is bound at residue Glu187. The segment at 211–214 (QQFK) is aspartate. The L-aspartate site is built by Arg233 and His461. 233-235 (RDE) lines the ATP pocket. An ATP-binding site is contributed by Glu495. Residue Arg502 participates in L-aspartate binding. 547 to 550 (GLDR) contributes to the ATP binding site.

Belongs to the class-II aminoacyl-tRNA synthetase family. Type 1 subfamily. Homodimer.

The protein localises to the cytoplasm. It carries out the reaction tRNA(Asx) + L-aspartate + ATP = L-aspartyl-tRNA(Asx) + AMP + diphosphate. Functionally, aspartyl-tRNA synthetase with relaxed tRNA specificity since it is able to aspartylate not only its cognate tRNA(Asp) but also tRNA(Asn). Reaction proceeds in two steps: L-aspartate is first activated by ATP to form Asp-AMP and then transferred to the acceptor end of tRNA(Asp/Asn). This is Aspartate--tRNA(Asp/Asn) ligase from Chlorobaculum parvum (strain DSM 263 / NCIMB 8327) (Chlorobium vibrioforme subsp. thiosulfatophilum).